Here is an 849-residue protein sequence, read N- to C-terminus: Probable ATP-dependent RNA helicase ddx20 (849 aa).

Residues 9–39 (FSNPMNSNSSNNIENNNNSNNNNNNFKNNFK) are disordered. A Q motif motif is present at residues 55 to 83 (ITFSELLLQKEVLKGLEDGGYQRPSPIQL). Residues Arg77, Gln82, 99 to 106 (AKSGTGKT), and 102 to 107 (GTGKTI) contribute to the ATP site. Residues 86–319 (IPLGISGVDL…KLYMNNENLV (234 aa)) form the Helicase ATP-binding domain. Residues 255-258 (DEAD) carry the DEAD box motif. In terms of domain architecture, Helicase C-terminal spans 355-499 (KCKSLVLVLE…QIENENENEN (145 aa)). Disordered regions lie at residues 480-504 (QQQQ…NNNE), 572-644 (INEN…ENDN), 667-737 (SNNN…YPHY), and 761-817 (NNYN…NNPY). Composition is skewed to acidic residues over residues 583–595 (NEDE…EDDY), 604–615 (EDEEEEQEEDDY), and 624–644 (EEEE…ENDN). Low complexity-rich tracts occupy residues 667–687 (SNNN…NNHY) and 696–720 (KNSI…SQSN).

The protein belongs to the DEAD box helicase family. DDX20 subfamily. As to quaternary structure, part of the core SMN complex.

Its subcellular location is the cytoplasm. The protein localises to the nucleus. The catalysed reaction is ATP + H2O = ADP + phosphate + H(+). Its function is as follows. The SMN complex catalyzes the assembly of small nuclear ribonucleoproteins (snRNPs), the building blocks of the spliceosome, and thereby plays an important role in the splicing of cellular pre-mRNAs. Most spliceosomal snRNPs contain a common set of Sm proteins SNRPB, SNRPD1, SNRPD2, SNRPD3, SNRPE, SNRPF and SNRPG that assemble in a heptameric protein ring on the Sm site of the small nuclear RNA to form the core snRNP (Sm core). In the cytosol, the Sm proteins SNRPD1, SNRPD2, SNRPE, SNRPF and SNRPG are trapped in an inactive 6S pICln-Sm complex by the chaperone CLNS1A that controls the assembly of the core snRNP. To assemble core snRNPs, the SMN complex accepts the trapped 5Sm proteins from CLNS1A forming an intermediate. Binding of snRNA inside 5Sm triggers eviction of the SMN complex, thereby allowing binding of SNRPD3 and SNRPB to complete assembly of the core snRNP. May also play a role in the metabolism of small nucleolar ribonucleoprotein (snoRNPs). In Dictyostelium discoideum (Social amoeba), this protein is Probable ATP-dependent RNA helicase ddx20 (ddx20).